The following is a 449-amino-acid chain: Tubulin beta chain (449 aa).

Positions 11, 69, 138, 142, 143, 144, 204, and 226 each coordinate GTP. Residue E69 participates in Mg(2+) binding. The interval 426–449 (QDATAEEEGEFDEEEGEMGAEEGA) is disordered. Over residues 429-449 (TAEEEGEFDEEEGEMGAEEGA) the composition is skewed to acidic residues.

Belongs to the tubulin family. As to quaternary structure, dimer of alpha and beta chains. A typical microtubule is a hollow water-filled tube with an outer diameter of 25 nm and an inner diameter of 15 nM. Alpha-beta heterodimers associate head-to-tail to form protofilaments running lengthwise along the microtubule wall with the beta-tubulin subunit facing the microtubule plus end conferring a structural polarity. Microtubules usually have 13 protofilaments but different protofilament numbers can be found in some organisms and specialized cells. Mg(2+) serves as cofactor.

The protein localises to the cytoplasm. The protein resides in the cytoskeleton. In terms of biological role, tubulin is the major constituent of microtubules, a cylinder consisting of laterally associated linear protofilaments composed of alpha- and beta-tubulin heterodimers. Microtubules grow by the addition of GTP-tubulin dimers to the microtubule end, where a stabilizing cap forms. Below the cap, tubulin dimers are in GDP-bound state, owing to GTPase activity of alpha-tubulin. This chain is Tubulin beta chain, found in Toxoplasma gondii.